Here is a 458-residue protein sequence, read N- to C-terminus: MTREEKQLFGTDGIRGRANYEPMTVELSVLLGKAVAGVLQERKPGKHRVVVGKDTRLSGYMFENALVAGLTSMGIETLVLGPIPTPGVAFITRAYRADAGIMISASHNPYWDNGIKIFSSEGFKISDVIERRIEQMVACRDFGNFPEDYAVGKNKRVVDAMGRYIEFAKATFPKGRTLKGLKIVLDCAHGAAYKVAPSVFEELDAEVICYGCEPTGSNINDNCGALFPSVIQKAVIEHKADVGIALDGDGDRIIMVNEKGHIVDGDMILSICASDLKKKALLNGNRVVATVMTNFGVLKYLESLGIETLISSVGDRHVLQNMLEHEANLGGEQSGHMIFLDYNTTGDGIVSALQVLRIMIESESTLSDLTSLIVKSPQALINVSVKEKIPLDTLPIVQEALRDVRSSLGDSGRVLLRYSGTENICRVMVEGLKKHQVDSLAKTIADIVDSELGAGIIE.

S106 acts as the Phosphoserine intermediate in catalysis. Residues S106, D247, D249, and D251 each contribute to the Mg(2+) site. S106 is subject to Phosphoserine.

This sequence belongs to the phosphohexose mutase family. The cofactor is Mg(2+). Activated by phosphorylation.

It catalyses the reaction alpha-D-glucosamine 1-phosphate = D-glucosamine 6-phosphate. Functionally, catalyzes the conversion of glucosamine-6-phosphate to glucosamine-1-phosphate. The polypeptide is Phosphoglucosamine mutase (Chlamydia caviae (strain ATCC VR-813 / DSM 19441 / 03DC25 / GPIC) (Chlamydophila caviae)).